The following is a 397-amino-acid chain: Elongation factor Tu 1 (397 aa).

The tr-type G domain maps to 10 to 206 (KPHVNIGTIG…AIDTWIPEPV (197 aa)). The segment at 19 to 26 (GHVDHGKT) is G1. 19–26 (GHVDHGKT) is a binding site for GTP. Residue T26 participates in Mg(2+) binding. A G2 region spans residues 61 to 65 (GITIS). Positions 82 to 85 (DCPG) are G3. GTP-binding positions include 82–86 (DCPGH) and 137–140 (NKCD). Residues 137-140 (NKCD) form a G4 region. The segment at 175–177 (SAL) is G5.

It belongs to the TRAFAC class translation factor GTPase superfamily. Classic translation factor GTPase family. EF-Tu/EF-1A subfamily. Monomer.

It is found in the cytoplasm. The catalysed reaction is GTP + H2O = GDP + phosphate + H(+). Its function is as follows. GTP hydrolase that promotes the GTP-dependent binding of aminoacyl-tRNA to the A-site of ribosomes during protein biosynthesis. The polypeptide is Elongation factor Tu 1 (Alkaliphilus metalliredigens (strain QYMF)).